Here is a 182-residue protein sequence, read N- to C-terminus: Adenine phosphoribosyltransferase (182 aa).

Belongs to the purine/pyrimidine phosphoribosyltransferase family. As to quaternary structure, homodimer.

Its subcellular location is the cytoplasm. It catalyses the reaction AMP + diphosphate = 5-phospho-alpha-D-ribose 1-diphosphate + adenine. Its pathway is purine metabolism; AMP biosynthesis via salvage pathway; AMP from adenine: step 1/1. Its function is as follows. Catalyzes a salvage reaction resulting in the formation of AMP, that is energically less costly than de novo synthesis. The polypeptide is Adenine phosphoribosyltransferase (Sulfurimonas denitrificans (strain ATCC 33889 / DSM 1251) (Thiomicrospira denitrificans (strain ATCC 33889 / DSM 1251))).